Reading from the N-terminus, the 1052-residue chain is Kruppel-like factor 18 (1052 aa).

3 C2H2-type zinc fingers span residues 964–988 (YVCTYEDCKMSYSKACHLRTHMRKH), 994–1018 (YVCDVEGCTWKFARSDELNRHKKRH), and 1024–1046 (YLCSICSKNFARSDHLKQHAKVH).

Belongs to the krueppel C2H2-type zinc-finger protein family.

The protein localises to the nucleus. This Homo sapiens (Human) protein is Kruppel-like factor 18.